A 244-amino-acid polypeptide reads, in one-letter code: Putative ribosomal recycling factor, mitochondrial (244 aa).

The protein belongs to the RRF family.

It is found in the mitochondrion. Functionally, necessary for protein synthesis in mitochondria. Functions as a ribosome recycling factor in mitochondria. The protein is Putative ribosomal recycling factor, mitochondrial (rrf1) of Schizosaccharomyces pombe (strain 972 / ATCC 24843) (Fission yeast).